Here is a 1436-residue protein sequence, read N- to C-terminus: Inositol hexakisphosphate and diphosphoinositol-pentakisphosphate kinase 1 (1436 aa).

Residue 64–65 (KK) coordinates substrate. ATP-binding positions include arginine 145, lysine 198, histidine 205, arginine 224, 248–251 (EEFM), and 257–259 (DVK). Residue 224 to 225 (RK) coordinates substrate. Substrate contacts are provided by lysine 259 and arginine 273. ATP is bound by residues serine 275, aspartate 320, and 332–334 (DVN). A substrate-binding site is contributed by 337–340 (SFVK). The segment at 382 to 453 (PTTSGTMMEL…VLDITRLLLA (72 aa)) is polyphosphoinositide-binding domain. Residues 915-998 (GSAPAGCGFR…TSSSRPGGYR (84 aa)) form a disordered region. A phosphoserine mark is found at serine 939, serine 982, serine 1032, serine 1068, serine 1140, and serine 1147. Disordered stretches follow at residues 1131–1191 (NHQA…GFSD) and 1389–1436 (SELS…EAIS). Over residues 1163–1181 (SSGPSSTVSSAGPSSPTTV) the composition is skewed to low complexity. Acidic residues predominate over residues 1405–1436 (LSEETELQAQEVSEEIDQESEVVDELPPEAIS).

Belongs to the histidine acid phosphatase family. VIP1 subfamily.

The protein localises to the cytoplasm. Its subcellular location is the cytosol. It localises to the cell membrane. It carries out the reaction 1D-myo-inositol hexakisphosphate + ATP = 1-diphospho-1D-myo-inositol 2,3,4,5,6-pentakisphosphate + ADP. It catalyses the reaction 5-diphospho-1D-myo-inositol 1,2,3,4,6-pentakisphosphate + ATP + H(+) = 1,5-bis(diphospho)-1D-myo-inositol 2,3,4,6-tetrakisphosphate + ADP. In terms of biological role, bifunctional inositol kinase that acts in concert with the IP6K kinases IP6K1, IP6K2 and IP6K3 to synthesize the diphosphate group-containing inositol pyrophosphates diphosphoinositol pentakisphosphate, PP-InsP5, and bis-diphosphoinositol tetrakisphosphate, (PP)2-InsP4. PP-InsP5 and (PP)2-InsP4, also respectively called InsP7 and InsP8, regulate a variety of cellular processes, including apoptosis, vesicle trafficking, cytoskeletal dynamics, exocytosis, insulin signaling and neutrophil activation. Phosphorylates inositol hexakisphosphate (InsP6) at position 1 to produce PP-InsP5 which is in turn phosphorylated by IP6Ks to produce (PP)2-InsP4. Alternatively, phosphorylates PP-InsP5 at position 1, produced by IP6Ks from InsP6, to produce (PP)2-InsP4. Activated when cells are exposed to hyperosmotic stress. This chain is Inositol hexakisphosphate and diphosphoinositol-pentakisphosphate kinase 1, found in Mus musculus (Mouse).